The following is a 265-amino-acid chain: MRLVKKEFPDVGELVIGTVKKIAEHGAYVYLDEYDLEAFAPTQEIVQSWFHSIRDYVKEGNKTVFKVISVNPKMRVVEVSLKRVRVDEKEKKLLLYRHRVRVLKLLEIAMKKLNRPAEEALKVMWYLEEQFGDPFKVFEEVVKTGPHVLDDLQLDAKLKEIIIELARQQVELPPTKISGIIKIVSVEGDGVEKIKAALIELEKTLREKFPQISTKIYVVGPPRYRIDLTGQQPKQVEAAFSEAANILQALQKKYKVIGNIQRIEQ.

The 71-residue stretch at Gly12–Lys82 folds into the S1 motif domain.

The protein belongs to the eIF-2-alpha family. In terms of assembly, heterotrimer composed of an alpha, a beta and a gamma chain.

EIF-2 functions in the early steps of protein synthesis by forming a ternary complex with GTP and initiator tRNA. The sequence is that of Translation initiation factor 2 subunit alpha from Pyrobaculum aerophilum (strain ATCC 51768 / DSM 7523 / JCM 9630 / CIP 104966 / NBRC 100827 / IM2).